We begin with the raw amino-acid sequence, 173 residues long: Ribulose bisphosphate carboxylase small subunit, chloroplastic 3 (173 aa).

A chloroplast-targeting transit peptide spans 1 to 49; it reads MASIPATVATVAQANMVAPFTGLKSNAAFPVTKKVNDFSTLPSNGGRVQ.

This sequence belongs to the RuBisCO small chain family. In terms of assembly, heterohexadecamer of 8 large and 8 small subunits.

It localises to the plastid. Its subcellular location is the chloroplast. Its function is as follows. RuBisCO catalyzes two reactions: the carboxylation of D-ribulose 1,5-bisphosphate, the primary event in carbon dioxide fixation, as well as the oxidative fragmentation of the pentose substrate. Both reactions occur simultaneously and in competition at the same active site. Although the small subunit is not catalytic it is essential for maximal activity. The sequence is that of Ribulose bisphosphate carboxylase small subunit, chloroplastic 3 from Flaveria pringlei.